The sequence spans 504 residues: Pyrichalasin C-7 hydroxylase (504 aa).

A signal peptide spans 1–17 (MLNSAACIVLAITAVLG). Cysteine 449 serves as a coordination point for heme.

The protein belongs to the cytochrome P450 family. Requires heme as cofactor.

Its pathway is mycotoxin biosynthesis. Functionally, cytochrome P450 monooxygenase; part of the gene cluster that mediates the biosynthesis of the mycotoxin pyrichalasin H, a tyrosine-derived cytochalasan that inhibits the growth of rice seedlings, but also inhibits lymphocyte capping and actin polymerization and alters cell morphology. Pyrichalasin H is indicated as the responsible agent for the genus-specific pathogenicity of M.grisea toward crabgrass. The first step in the pathway is catalyzed by the O-methyltransferase pyiA which methylates free tyrosine to generate the precursor O-methyltyrosine. The hybrid PKS-NRPS pyiS, assisted by the enoyl reductase pyiC, are responsible for fusion of the O-methyltyrosine precursor and the polyketide backbone. The polyketide synthase module (PKS) of pyiS is responsible for the synthesis of the polyketide backbone and the downstream nonribosomal peptide synthetase (NRPS) amidates the carboxyl end of the polyketide with the O-methyltyrosine precursor. As the NRPS A-domain demonstrates substrate tolerance, pyiS can also use phenylalanine, tyrosine and even para-chlorophenylalanine as amino acid precursor, which leads to the production of novel cytochalasans, including halogenated cytochalasans. Because pyiS lacks a designated enoylreductase (ER) domain, the required activity is provided the enoyl reductase pyiC. Reduction by the hydrolyase pyiE leads to 1,5-dihydropyrrolone, which is substrate for dehydration and intra-molecular Diels-Alder cyclization by the Diels-Alderase pyiF to yield the required isoindolone-fused macrocycle. The tailoring cytochrome P450 monooxygenases piyD and piyG catalyze the hydroxylation at C-18 and C-7, respectivily, whereas the short-chain dehydrogenase/reductase pyiH reduces the carbonyl at C-21 in preparation for the transfer of an acetyl group by the acetyltransferase pyiB. These 3 reactions whose order is not clear yet, lead to the production of O-methylpyrichalasin J, a deacetylated pyrichalasin H. Finally, pyiB to converts O-methylpyrichalasin J into the final product pyrichalasin H via acetylation of C-21. In Pyricularia grisea (Crabgrass-specific blast fungus), this protein is Pyrichalasin C-7 hydroxylase.